The chain runs to 150 residues: Ribonuclease H (150 aa).

Residues 1-141 enclose the RNase H type-1 domain; the sequence is MKFIEVHTDG…VDVLARNQAI (141 aa). 4 residues coordinate Mg(2+): D9, E47, D69, and D133.

The protein belongs to the RNase H family. As to quaternary structure, monomer. It depends on Mg(2+) as a cofactor.

The protein localises to the cytoplasm. The enzyme catalyses Endonucleolytic cleavage to 5'-phosphomonoester.. Functionally, endonuclease that specifically degrades the RNA of RNA-DNA hybrids. This is Ribonuclease H from Xanthomonas euvesicatoria pv. vesicatoria (strain 85-10) (Xanthomonas campestris pv. vesicatoria).